Here is a 274-residue protein sequence, read N- to C-terminus: Aspartate/glutamate leucyltransferase (274 aa).

Belongs to the R-transferase family. Bpt subfamily.

It is found in the cytoplasm. The enzyme catalyses N-terminal L-glutamyl-[protein] + L-leucyl-tRNA(Leu) = N-terminal L-leucyl-L-glutamyl-[protein] + tRNA(Leu) + H(+). It catalyses the reaction N-terminal L-aspartyl-[protein] + L-leucyl-tRNA(Leu) = N-terminal L-leucyl-L-aspartyl-[protein] + tRNA(Leu) + H(+). Its function is as follows. Functions in the N-end rule pathway of protein degradation where it conjugates Leu from its aminoacyl-tRNA to the N-termini of proteins containing an N-terminal aspartate or glutamate. The chain is Aspartate/glutamate leucyltransferase from Ruegeria sp. (strain TM1040) (Silicibacter sp.).